A 1385-amino-acid chain; its full sequence is DNA-directed RNA polymerase subunit beta (1385 aa).

Belongs to the RNA polymerase beta chain family. The RNAP catalytic core consists of 2 alpha, 1 beta, 1 beta' and 1 omega subunit. When a sigma factor is associated with the core the holoenzyme is formed, which can initiate transcription.

It carries out the reaction RNA(n) + a ribonucleoside 5'-triphosphate = RNA(n+1) + diphosphate. In terms of biological role, DNA-dependent RNA polymerase catalyzes the transcription of DNA into RNA using the four ribonucleoside triphosphates as substrates. This chain is DNA-directed RNA polymerase subunit beta, found in Sulfurovum sp. (strain NBC37-1).